The chain runs to 728 residues: Tripartite terminase subunit 1 (728 aa).

The C3H1-type zinc-finger motif lies at 186–214 (CASCFAEAAMLPNQGESVLSMLAAVNCNH). Residues 239-278 (ARAAGRAGGGRESERRGREDADDEEDDEEEPRDGQGDAGD) are disordered. A compositionally biased stretch (basic and acidic residues) spans 247-257 (GGRESERRGRE). The span at 258 to 269 (DADDEEDDEEEP) shows a compositional bias: acidic residues. 653-660 (YNRVWEKS) is an ATP binding site.

It belongs to the herpesviridae TRM1 protein family. In terms of assembly, associates with TRM2 and TRM3 to form the tripartite terminase complex. Interacts with portal protein.

It is found in the host nucleus. Functionally, component of the molecular motor that translocates viral genomic DNA in empty capsid during DNA packaging. Forms a tripartite terminase complex together with TRM2 and TRM3 in the host cytoplasm. Once the complex reaches the host nucleus, it interacts with the capsid portal vertex. This portal forms a ring in which genomic DNA is translocated into the capsid. TRM1 carries an endonuclease activity that plays an important role for the cleavage of concatemeric viral DNA into unit length genomes. This chain is Tripartite terminase subunit 1, found in Equine herpesvirus 2 (strain 86/87) (EHV-2).